The chain runs to 784 residues: Toll-like receptor 2 (784 aa).

The signal sequence occupies residues 1–24 (MLHVLWTFWILVAMTDLSRKGCSA). The Extracellular portion of the chain corresponds to 25 to 588 (QASLSCDAAG…RPSVLECHQT (564 aa)). A disulfide bridge connects residues C30 and C36. LRR repeat units lie at residues 54–77 (MKSLDLSNNKITSIGHGDLRGCVN), 78–101 (LRALILQSSGINTIEEDAFSSLSK), 102–125 (LEYLDLSDNHLSNLSSSWFRPLSS), 126–150 (LKYLNLLGNPYRILGETPLFLNLTH), 151–175 (LQTLRVGNVATFSGIRRTDFAGLTS), 176–199 (LDELEIKALSLQNYEPGSLQSIQS), 200–223 (IHHLTFHLSQSDFLLGVFEDTLSS), 224–250 (VGYLELRDANLDSFYFSELSTDEMNSP), 251–278 (MKKLAFQNADLTDESFNELLKLLRYTPE), 279–308 (LLEVEFDDCTLNGVGDFQPSESDVVRELGK), 309–337 (VETLIIRRLHIPRFYSFYDLSTVYTLLEK), 338–361 (VKRITVENSKVFLVPCLFSQHLKS), 362–388 (LEFLDLSENLMVEEYLKNAACEGSWPS), 389–414 (LQTLILRQNRLKSIERTGKILLTLKN), 415–437 (LTALDISRNSFQSMPDSCQWPGK), 438–457 (MRFLNLSSTGIQAVKMCIPQ), 458–478 (TLEVLDVSNNNLISFSLFLPL), 479–500 (LRELYISRNKLHTLPDASLFPV), and 501–524 (LLVMKIRENAISTFSKDQLSSFPK). N114 and N147 each carry an N-linked (GlcNAc...) asparagine glycan. A disulfide bridge links C353 with C382. N414 carries an N-linked (GlcNAc...) asparagine glycan. Residues C432 and C454 are joined by a disulfide bond. N-linked (GlcNAc...) asparagine glycosylation is present at N442. Residues 525–579 (LVSLEAGGNHFICSCELLSFTLEHPALVQVLAGWPDSYLCDSPSRLRGQRVQDAR) enclose the LRRCT domain. The chain crosses the membrane as a helical span at residues 589–609 (LLVSGVCCALVLLILLIGGLC). At 610–784 (HHFHGLWYLR…WVNLRTAIKS (175 aa)) the chain is on the cytoplasmic side. Residues 639–782 (ICYDAFVSYS…VFWVNLRTAI (144 aa)) enclose the TIR domain. A Glycyl lysine isopeptide (Lys-Gly) (interchain with G-Cter in ubiquitin) cross-link involves residue K754. The ATG16L1-binding motif signature appears at 761-778 (YLEWPLDEGQQEVFWVNL).

It belongs to the Toll-like receptor family. As to quaternary structure, interacts with LY96, TLR1 and TLR6 (via extracellular domain). TLR2 seems to exist in heterodimers with either TLR1 or TLR6 before stimulation by the ligand. The heterodimers form bigger oligomers in response to their corresponding ligands as well as further heterotypic associations with other receptors such as CD14 and/or CD36. Binds MYD88 (via TIR domain). Interacts with TICAM1. Interacts with CNPY3. Interacts with ATG16L1. Interacts with PPP1R11. Interacts with TICAM2. Interacts with TIRAP. In terms of processing, ubiquitinated at Lys-754 by PPP1R11, leading to its degradation. Deubiquitinated by USP2. Post-translationally, glycosylation of Asn-442 is critical for secretion of the N-terminal ectodomain of TLR2.

It is found in the membrane. Its subcellular location is the cytoplasmic vesicle. It localises to the phagosome membrane. The protein resides in the membrane raft. Cooperates with LY96 to mediate the innate immune response to bacterial lipoproteins and other microbial cell wall components. Cooperates with TLR1 or TLR6 to mediate the innate immune response to bacterial lipoproteins or lipopeptides. Acts via MYD88 and TRAF6, leading to NF-kappa-B activation, cytokine secretion and the inflammatory response. May also promote apoptosis in response to lipoproteins. Forms activation clusters composed of several receptors depending on the ligand, these clusters trigger signaling from the cell surface and subsequently are targeted to the Golgi in a lipid-raft dependent pathway. Forms the cluster TLR2:TLR6:CD14:CD36 in response to diacylated lipopeptides and TLR2:TLR1:CD14 in response to triacylated lipopeptides. The protein is Toll-like receptor 2 (TLR2) of Cricetulus griseus (Chinese hamster).